The chain runs to 103 residues: Small ribosomal subunit protein uS10 (103 aa).

This sequence belongs to the universal ribosomal protein uS10 family. As to quaternary structure, part of the 30S ribosomal subunit.

Involved in the binding of tRNA to the ribosomes. The polypeptide is Small ribosomal subunit protein uS10 (Shewanella frigidimarina (strain NCIMB 400)).